Reading from the N-terminus, the 388-residue chain is 1-deoxy-D-xylulose 5-phosphate reductoisomerase (388 aa).

NADPH contacts are provided by T10, G11, T12, I13, R37, Q38, and N122. K123 is a binding site for 1-deoxy-D-xylulose 5-phosphate. Residue E124 participates in NADPH binding. D148 provides a ligand contact to Mn(2+). The 1-deoxy-D-xylulose 5-phosphate site is built by S149, E150, S179, and H202. Residue E150 coordinates Mn(2+). G208 serves as a coordination point for NADPH. The 1-deoxy-D-xylulose 5-phosphate site is built by S215, N220, K221, and E224. E224 is a binding site for Mn(2+).

The protein belongs to the DXR family. Mg(2+) serves as cofactor. It depends on Mn(2+) as a cofactor.

The catalysed reaction is 2-C-methyl-D-erythritol 4-phosphate + NADP(+) = 1-deoxy-D-xylulose 5-phosphate + NADPH + H(+). The protein operates within isoprenoid biosynthesis; isopentenyl diphosphate biosynthesis via DXP pathway; isopentenyl diphosphate from 1-deoxy-D-xylulose 5-phosphate: step 1/6. Catalyzes the NADPH-dependent rearrangement and reduction of 1-deoxy-D-xylulose-5-phosphate (DXP) to 2-C-methyl-D-erythritol 4-phosphate (MEP). This Laribacter hongkongensis (strain HLHK9) protein is 1-deoxy-D-xylulose 5-phosphate reductoisomerase.